Here is a 338-residue protein sequence, read N- to C-terminus: mRNA decay activator protein ZFP36L1 (338 aa).

The tract at residues 1–111 (MTTTLVSATI…QKQPGSGQVN (111 aa)) is necessary and sufficient for the association with mRNA decay enzymes and mRNA decay activation. S54 carries the post-translational modification Phosphoserine; by MAPKAPK2. The segment at 71-113 (LKGEPAPSLSSRDSRFRDRSFSEGGERLLPTQKQPGSGQVNSS) is disordered. Over residues 82 to 96 (RDSRFRDRSFSEGGE) the composition is skewed to basic and acidic residues. At S90 the chain carries Phosphoserine; by PKB/AKT1. S92 carries the phosphoserine; by PKB/AKT1 and MAPKAPK2 modification. Residues 101 to 113 (TQKQPGSGQVNSS) show a composition bias toward polar residues. 2 consecutive C3H1-type zinc fingers follow at residues 114-142 (RYKTELCRPFEENGACKYGDKCQFAHGIH) and 152-180 (KYKTELCRTFHTIGFCPYGPRCHFIHNAE). The necessary for mRNA decay activation stretch occupies residues 185–338 (LAGGRDLSAD…IFSRLSISDD (154 aa)). S203 is modified (phosphoserine; by PKB/AKT1 and MAPKAPK2). A disordered region spans residues 273-338 (SPTTFLFRPM…IFSRLSISDD (66 aa)). Over residues 305–318 (YLSSSSSSHSGSDS) the composition is skewed to low complexity. Residue S318 is modified to Phosphoserine. The residue at position 334 (S334) is a Phosphoserine; by RPS6KA1.

In terms of assembly, associates with the cytoplasmic CCR4-NOT deadenylase and RNA exosome complexes to trigger ARE-containing mRNA deadenylation and decay processes. Interacts with CNOT1. Interacts (via N-terminus) with CNOT6. Interacts with CNOT7; this interaction is inhibited in response to phorbol 12-myristate 13-acetate (PMA) treatment in a p38 MAPK-dependent manner. Interacts with DCP1A. Interacts (via N-terminus) with DCP2. Interacts (via N-terminus) with EXOSC2. Interacts with XRN1. Interacts (via phosphorylated form) with YWHAB; this interaction occurs in a protein kinase AKT1-dependent manner. Interacts (via phosphorylated form) with YWHAZ; this interaction occurs in a p38 MAPK- and AKT-signaling pathways. Post-translationally, phosphorylated. Phosphorylated by RPS6KA1 at Ser-334 upon phorbol 12-myristate 13-acetate (PMA) treatment; this phosphorylation results in dissociation of the CCR4-NOT deadenylase complex and induces p38 MAPK-mediated stabilization of the low-density lipoprotein receptor LDLR mRNA. Phosphorylated by protein kinase AKT1 at Ser-92 and Ser-203 in response to insulin; these phosphorylations stabilize ZFP36L1, increase the association with 14-3-3 proteins and mediate ARE-containing mRNA stabilization. AKT1-mediated phosphorylation at Ser-92 does not impair ARE-containing RNA-binding. Phosphorylated at Ser-54, Ser-92 and Ser-203 by MAPKAPK2; these phosphorylations increase the association with 14-3-3 proteins and mediate ARE-containing mRNA stabilization in a protein kinase AKT1-independent manner. MAPKAPK2-mediated phosphorylations at Ser-54, Ser-92 and Ser-203 do not impair ARE-containing RNA-binding. Phosphorylations increase the association with 14-3-3 proteins and mediate ARE-containing mRNA stabilization during early adipogenesis in a p38 MAPK- and AKT-dependent manner. Ubiquitinated. Ubiquitination leads to proteasomal degradation, a process inhibited by phosphorylations at Ser-90, Ser-92 and Ser-203. Expressed in preadipocytes and adipocytes. Expressed in the proximal and distal tubules in the renal cortex (at protein level). Expressed in ovary, heart, kidney, lung, spleen and thymus. Weakly expressed in brain, liver and testis. Expressed in osteoblasts. Expressed in embryonic stem cells (ESCs). Expressed through B lymphocyte development.

It localises to the nucleus. The protein resides in the cytoplasm. The protein localises to the cytoplasmic granule. Its subcellular location is the P-body. Zinc-finger RNA-binding protein that destabilizes several cytoplasmic AU-rich element (ARE)-containing mRNA transcripts by promoting their poly(A) tail removal or deadenylation, and hence provide a mechanism for attenuating protein synthesis. Acts as a 3'-untranslated region (UTR) ARE mRNA-binding adapter protein to communicate signaling events to the mRNA decay machinery. Functions by recruiting the CCR4-NOT deadenylating complex and components of the cytoplasmic RNA decay machinery to the bound ARE-containing mRNAs, and hence promotes ARE-mediated mRNA deadenylation and decay processes. Also induces the degradation of ARE-containing mRNAs even in absence of poly(A) tail. Binds to 3'-UTR ARE of numerous mRNAs. Positively regulates early adipogenesis by promoting ARE-mediated mRNA decay of immediate early genes (IEGs). Promotes ARE-mediated mRNA decay of mineralocorticoid receptor NR3C2 mRNA in response to hypertonic stress. Negatively regulates hematopoietic/erythroid cell differentiation by promoting ARE-mediated mRNA decay of the transcription factor STAT5B mRNA. Positively regulates monocyte/macrophage cell differentiation by promoting ARE-mediated mRNA decay of the cyclin-dependent kinase CDK6 mRNA. Promotes degradation of ARE-containing pluripotency-associated mRNAs in embryonic stem cells (ESCs), such as NANOG, through a fibroblast growth factor (FGF)-induced MAPK-dependent signaling pathway, and hence attenuates ESC self-renewal and positively regulates mesendoderm differentiation. May play a role in mediating pro-apoptotic effects in malignant B-cells by promoting ARE-mediated mRNA decay of BCL2 mRNA. In association with ZFP36L2 maintains quiescence on developing B lymphocytes by promoting ARE-mediated decay of several mRNAs encoding cell cycle regulators that help B cells progress through the cell cycle, and hence ensuring accurate variable-diversity-joining (VDJ) recombination and functional immune cell formation. Together with ZFP36L2 is also necessary for thymocyte development and prevention of T-cell acute lymphoblastic leukemia (T-ALL) transformation by promoting ARE-mediated mRNA decay of the oncogenic transcription factor NOTCH1 mRNA. Involved in the delivery of target ARE-mRNAs to processing bodies (PBs). In addition to its cytosolic mRNA-decay function, plays a role in the regulation of nuclear mRNA 3'-end processing; modulates mRNA 3'-end maturation efficiency of the DLL4 mRNA through binding with an ARE embedded in a weak noncanonical polyadenylation (poly(A)) signal in endothelial cells. Also involved in the regulation of stress granule (SG) and P-body (PB) formation and fusion. Plays a role in vasculogenesis and endocardial development. Involved in the regulation of keratinocyte proliferation, differentiation and apoptosis. Plays a role in myoblast cell differentiation. The protein is mRNA decay activator protein ZFP36L1 of Mus musculus (Mouse).